Consider the following 169-residue polypeptide: Putative esterase F42H10.6 (169 aa).

The protein belongs to the thioesterase paaI family.

This is Putative esterase F42H10.6 from Caenorhabditis elegans.